Consider the following 700-residue polypeptide: Protein no-on-transient A (700 aa).

The interval 1 to 270 (MESAGKQDNN…GGGGPRGGED (270 aa)) is disordered. Composition is skewed to low complexity over residues 9 to 29 (NNAT…ANKN) and 54 to 69 (GGPN…NQNG). Gly residues predominate over residues 70–79 (GVTGGGGAVG). Low complexity-rich tracts occupy residues 80–89 (GPNQNKNFGN), 96–124 (GNRN…KPNN), and 144–175 (AAAG…VHGQ). Residues 176–208 (GNQGGPGNQGGAGNQGGQGNQGGAGNQGNGQGF) are compositionally biased toward gly residues. At S236 the chain carries Phosphoserine. Gly residues predominate over residues 253-266 (MGGGGGGGGGGGPR). 2 consecutive RRM domains span residues 302–374 (NRLY…FAPN) and 376–457 (TILR…PMEV). Residues 505–616 (NLFKTKQDAL…AQQLNSLLDQ (112 aa)) are a coiled coil. A compositionally biased stretch (basic and acidic residues) spans 568-582 (EMRKREEETMRRHQT). Disordered stretches follow at residues 568 to 591 (EMRK…MNRQ) and 677 to 700 (MNQG…RRRF). Residues 682 to 691 (NQRGNNGGGN) show a composition bias toward gly residues.

In terms of biological role, required for normal vision and courtship behavior in Drosophila. The polypeptide is Protein no-on-transient A (nonA) (Drosophila melanogaster (Fruit fly)).